The primary structure comprises 545 residues: CTP synthase (545 aa).

The interval M1 to L266 is amidoligase domain. CTP is bound at residue S14. S14 contributes to the UTP binding site. ATP is bound by residues S15–I20 and D72. Mg(2+)-binding residues include D72 and E140. Residues D147–E149, K187–Q192, and K223 contribute to the CTP site. UTP-binding positions include K187–Q192 and K223. ATP is bound at residue K239 to V241. A Glutamine amidotransferase type-1 domain is found at T291–G542. L-glutamine is bound at residue G352. The Nucleophile; for glutamine hydrolysis role is filled by C379. L-glutamine-binding positions include L380–Q383, E403, and R470. Residues H515 and E517 contribute to the active site.

The protein belongs to the CTP synthase family. Homotetramer.

It carries out the reaction UTP + L-glutamine + ATP + H2O = CTP + L-glutamate + ADP + phosphate + 2 H(+). It catalyses the reaction L-glutamine + H2O = L-glutamate + NH4(+). The enzyme catalyses UTP + NH4(+) + ATP = CTP + ADP + phosphate + 2 H(+). Its pathway is pyrimidine metabolism; CTP biosynthesis via de novo pathway; CTP from UDP: step 2/2. Its activity is regulated as follows. Allosterically activated by GTP, when glutamine is the substrate; GTP has no effect on the reaction when ammonia is the substrate. The allosteric effector GTP functions by stabilizing the protein conformation that binds the tetrahedral intermediate(s) formed during glutamine hydrolysis. Inhibited by the product CTP, via allosteric rather than competitive inhibition. In terms of biological role, catalyzes the ATP-dependent amination of UTP to CTP with either L-glutamine or ammonia as the source of nitrogen. Regulates intracellular CTP levels through interactions with the four ribonucleotide triphosphates. This chain is CTP synthase, found in Proteus mirabilis (strain HI4320).